The chain runs to 199 residues: Recombination protein RecR (199 aa).

The C4-type zinc-finger motif lies at 58–73; that stretch reads CRICYNITDTEVCNIC. Residues 81–176 enclose the Toprim domain; sequence SLICVVSHPM…KVTRIAHGVP (96 aa).

Belongs to the RecR family.

Its function is as follows. May play a role in DNA repair. It seems to be involved in an RecBC-independent recombinational process of DNA repair. It may act with RecF and RecO. The protein is Recombination protein RecR of Thermoanaerobacter sp. (strain X514).